Reading from the N-terminus, the 187-residue chain is Glutathione peroxidase 7 (187 aa).

An N-terminal signal peptide occupies residues 1 to 19; sequence MVAATVAAAWLLLWAAACA. Cys-57 is an active-site residue.

The protein belongs to the glutathione peroxidase family. Expressed in esophageal epithelial cells; expression is up-regulated after exposure to acidic bile acids.

The protein resides in the secreted. It catalyses the reaction 2 glutathione + H2O2 = glutathione disulfide + 2 H2O. In terms of biological role, it protects esophageal epithelia from hydrogen peroxide-induced oxidative stress. It suppresses acidic bile acid-induced reactive oxygen species (ROS) and protects against oxidative DNA damage and double-strand breaks. The sequence is that of Glutathione peroxidase 7 (GPX7) from Homo sapiens (Human).